We begin with the raw amino-acid sequence, 991 residues long: Adhesion G-protein coupled receptor F3 (991 aa).

An N-terminal signal peptide occupies residues 1–20 (MSSLALSQLLLAVTLPLLEL). The Extracellular portion of the chain corresponds to 21–694 (EPTFVPTAQS…ENPTLDLLSQ (674 aa)). N-linked (GlcNAc...) asparagine glycosylation is found at Asn75, Asn102, Asn118, Asn321, Asn362, Asn484, Asn571, Asn589, Asn630, and Asn660. The 166-residue stretch at 519 to 684 (HPFSFSSANV…SILMSQHTVP (166 aa)) folds into the GAIN-B domain. 2 cysteine pairs are disulfide-bonded: Cys635/Cys666 and Cys654/Cys668. A GPS region spans residues 635–684 (CVFWDHRVFQGQGGWSDEGCEVHAANASITQCICQHLTAFSILMSQHTVP). Residues 695–715 (VGTGASVLALLVCLAIYGLVW) traverse the membrane as a helical segment. Residues 716–730 (RVVVRNKVAFFRHTT) lie on the Cytoplasmic side of the membrane. A helical transmembrane segment spans residues 731 to 751 (LFNMVICLLVADTCFLGSPFL). Topologically, residues 752–757 (PSGYHS) are extracellular. Residues 758–778 (LICLVTAFLCHFFYLATFFWM) traverse the membrane as a helical segment. Topologically, residues 779–799 (LAQALVLAHQLLFVFHQLSKH) are cytoplasmic. A helical membrane pass occupies residues 800–820 (VVLSLMVMLGYLCPLGFAGVT). Over 821–850 (LGLYLPQRKYLWEGKCFLNGGGVMLYSFSE) the chain is Extracellular. The chain crosses the membrane as a helical span at residues 851–871 (PVLAIVGVNGLVLVIAVLKLL). At 872 to 892 (RPSLSEGPTVEKRQALVGVLK) the chain is on the cytoplasmic side. A helical transmembrane segment spans residues 893 to 913 (ALLILTPIFGLTWGLGVATLF). Topologically, residues 914-916 (DGS) are extracellular. A helical membrane pass occupies residues 917–937 (IVSHYAFSILNSLQGVFILVF). Residues 938–991 (GCLTDKKVLEALRKRLRGSRSSNSAISMVTNETYTSEHSKERSEPASYEERMTD) are Cytoplasmic-facing. A disordered region spans residues 964-991 (SMVTNETYTSEHSKERSEPASYEERMTD). Residues 972 to 991 (TSEHSKERSEPASYEERMTD) show a composition bias toward basic and acidic residues.

It belongs to the G-protein coupled receptor 2 family. Adhesion G-protein coupled receptor (ADGR) subfamily. As to quaternary structure, heterodimer of 2 chains generated by proteolytic processing; the large extracellular N-terminal fragment and the membrane-bound C-terminal fragment predominantly remain associated and non-covalently linked. Autoproteolytically processed at the GPS region of the GAIN-B domain; this cleavage modulates receptor activity. In terms of tissue distribution, expression is restricted to testis and circumvallate papillae.

It localises to the membrane. In terms of biological role, orphan receptor. The protein is Adhesion G-protein coupled receptor F3 (ADGRF3) of Mus musculus (Mouse).